Consider the following 81-residue polypeptide: Escargot/snail protein homolog (81 aa).

4 consecutive C2H2-type zinc fingers follow at residues 1 to 5, 17 to 39, 43 to 65, and 71 to 81; these read HQQFH, FSCK…IRTH, CKCH…IRTH, and FSCQHCNRAFA.

The protein belongs to the snail C2H2-type zinc-finger protein family.

It localises to the nucleus. The protein is Escargot/snail protein homolog of Apis mellifera (Honeybee).